The sequence spans 807 residues: Hyaluronate lyase (807 aa).

The N-terminal stretch at 1 to 40 (MTYRIKKWQKLSTITLLMAGVITLNGGEFRSVDKHQIAVA) is a signal peptide. Catalysis depends on residues N241, H297, and Y306.

This sequence belongs to the polysaccharide lyase 8 family.

It localises to the secreted. The enzyme catalyses [hyaluronan](n) = n 3-(4-deoxy-beta-D-gluc-4-enuronosyl)-N-acetyl-D-glucosamine + H2O. The sequence is that of Hyaluronate lyase from Staphylococcus aureus (strain NCTC 8325 / PS 47).